The chain runs to 178 residues: Ribosome maturation factor RimM (178 aa).

Residues 104 to 177 (SDEYYFYEVI…KIVVKLPEWL (74 aa)) form the PRC barrel domain.

It belongs to the RimM family. Binds ribosomal protein uS19.

Its subcellular location is the cytoplasm. In terms of biological role, an accessory protein needed during the final step in the assembly of 30S ribosomal subunit, possibly for assembly of the head region. Essential for efficient processing of 16S rRNA. May be needed both before and after RbfA during the maturation of 16S rRNA. It has affinity for free ribosomal 30S subunits but not for 70S ribosomes. The polypeptide is Ribosome maturation factor RimM (Thermosipho melanesiensis (strain DSM 12029 / CIP 104789 / BI429)).